A 92-amino-acid polypeptide reads, in one-letter code: Large ribosomal subunit protein bL25 (92 aa).

It belongs to the bacterial ribosomal protein bL25 family. In terms of assembly, part of the 50S ribosomal subunit; part of the 5S rRNA/L5/L18/L25 subcomplex. Contacts the 5S rRNA. Binds to the 5S rRNA independently of L5 and L18.

Functionally, this is one of the proteins that binds to the 5S RNA in the ribosome where it forms part of the central protuberance. The chain is Large ribosomal subunit protein bL25 from Aliivibrio salmonicida (strain LFI1238) (Vibrio salmonicida (strain LFI1238)).